Consider the following 185-residue polypeptide: Dioxygenase easH (185 aa).

Positions 17, 19, and 93 each coordinate Fe cation.

The protein belongs to the PhyH family. As to quaternary structure, homodimer. Fe cation serves as cofactor.

Its pathway is alkaloid biosynthesis; ergot alkaloid biosynthesis. Its function is as follows. Dioxygenase; part of the gene cluster that mediates the biosynthesis of fungal ergot alkaloid ergovaline, the predominant ergopeptine product in E.festucae var. lolii. DmaW catalyzes the first step of ergot alkaloid biosynthesis by condensing dimethylallyl diphosphate (DMAP) and tryptophan to form 4-dimethylallyl-L-tryptophan. The second step is catalyzed by the methyltransferase easF that methylates 4-dimethylallyl-L-tryptophan in the presence of S-adenosyl-L-methionine, resulting in the formation of 4-dimethylallyl-L-abrine. The catalase easC and the FAD-dependent oxidoreductase easE then transform 4-dimethylallyl-L-abrine to chanoclavine-I which is further oxidized by easD in the presence of NAD(+), resulting in the formation of chanoclavine-I aldehyde. Agroclavine dehydrogenase easG then mediates the conversion of chanoclavine-I aldehyde to agroclavine via a non-enzymatic adduct reaction: the substrate is an iminium intermediate that is formed spontaneously from chanoclavine-I aldehyde in the presence of glutathione. The presence of easA is not required to complete this reaction. Further conversion of agroclavine to paspalic acid is a two-step process involving oxidation of agroclavine to elymoclavine and of elymoclavine to paspalic acid, the second step being performed by the elymoclavine oxidase cloA. Paspalic acid is then further converted to D-lysergic acid. Ergovaline is assembled from D-lysergic acid and three different amino acids by the D-lysergyl-peptide-synthetase composed of a monomudular (lpsB) and a trimodular (lpsA) nonribosomal peptide synthetase subunit. In Epichloe festucae var. lolii (Neotyphodium lolii), this protein is Dioxygenase easH.